The following is a 313-amino-acid chain: MSTLGLPPAVFLMGPTASGKTALAVSLRSRFPFEIISVDSALVYRGMDVGTAKPDAATLARAPHHLLDIREPNETYSAAAFCDDARARMAAITARGRVPLLVGGTMLYFRALLQGLDDLPRADAALRKRLEQDAAERGWPALHAELAALDPATAARLAPNDSQRIGRALEIVELTGRPMSAQLAQTPRALPYDVLQLALVPSDRAALHRRIGERFDAMLEAGLVDEVEMLRRNHVLDSTMPAMRAVGYRQAWAYLDGDIDLEALREQGVAATRQLAKRQLTWLRSWPGAVTLDCLADDLESRAAALVAAHLGA.

14–21 (GPTASGKT) contributes to the ATP binding site. 16–21 (TASGKT) serves as a coordination point for substrate. Interaction with substrate tRNA stretches follow at residues 39–42 (DSAL) and 163–167 (QRIGR).

It belongs to the IPP transferase family. Monomer. Requires Mg(2+) as cofactor.

The enzyme catalyses adenosine(37) in tRNA + dimethylallyl diphosphate = N(6)-dimethylallyladenosine(37) in tRNA + diphosphate. Functionally, catalyzes the transfer of a dimethylallyl group onto the adenine at position 37 in tRNAs that read codons beginning with uridine, leading to the formation of N6-(dimethylallyl)adenosine (i(6)A). The sequence is that of tRNA dimethylallyltransferase from Thiobacillus denitrificans (strain ATCC 25259 / T1).